Consider the following 225-residue polypeptide: Uridylate kinase (225 aa).

9–10 is a binding site for ATP; sequence GS. G44 serves as a coordination point for UMP. 2 residues coordinate ATP: G45 and R49. Residues D66 and 114-120 each bind UMP; that span reads THPGHTT. The ATP site is built by T140, N141, Y146, and D149.

The protein belongs to the UMP kinase family. In terms of assembly, homohexamer.

Its subcellular location is the cytoplasm. The enzyme catalyses UMP + ATP = UDP + ADP. Its pathway is pyrimidine metabolism; CTP biosynthesis via de novo pathway; UDP from UMP (UMPK route): step 1/1. With respect to regulation, inhibited by UTP. In terms of biological role, catalyzes the reversible phosphorylation of UMP to UDP. The chain is Uridylate kinase from Thermococcus sibiricus (strain DSM 12597 / MM 739).